Consider the following 599-residue polypeptide: Kelch-like protein 41a (599 aa).

One can recognise a BTB domain in the interval 32 to 102; it reads VDCILKVGDR…LYSADIDITD (71 aa). Residues 137-239 enclose the BACK domain; sequence CLAIFRMGLV…PEKYLKEKVE (103 aa). 5 Kelch repeats span residues 339–391, 393–440, 441–488, 489–535, and 537–591; these read LLYV…EFEN, LFAV…SQNG, LVYC…VHKG, KIVV…SVDG, and LYAV…SMRL.

The protein localises to the cytoplasm. It is found in the cytoskeleton. The protein resides in the sarcoplasmic reticulum membrane. It localises to the endoplasmic reticulum membrane. Its function is as follows. Involved in skeletal muscle development and differentiation. The sequence is that of Kelch-like protein 41a (klhl41a) from Danio rerio (Zebrafish).